Here is a 257-residue protein sequence, read N- to C-terminus: 3-dehydroquinate dehydratase (257 aa).

3-dehydroquinate-binding positions include 50–52 and Arg-86; that span reads EWR. His-147 (proton donor/acceptor) is an active-site residue. Lys-174 (schiff-base intermediate with substrate) is an active-site residue. Residues Arg-216, Ser-235, and Gln-239 each contribute to the 3-dehydroquinate site.

It belongs to the type-I 3-dehydroquinase family. As to quaternary structure, homodimer.

The enzyme catalyses 3-dehydroquinate = 3-dehydroshikimate + H2O. The protein operates within metabolic intermediate biosynthesis; chorismate biosynthesis; chorismate from D-erythrose 4-phosphate and phosphoenolpyruvate: step 3/7. Its function is as follows. Involved in the third step of the chorismate pathway, which leads to the biosynthesis of aromatic amino acids. Catalyzes the cis-dehydration of 3-dehydroquinate (DHQ) and introduces the first double bond of the aromatic ring to yield 3-dehydroshikimate. This chain is 3-dehydroquinate dehydratase, found in Geobacillus thermodenitrificans (strain NG80-2).